Here is a 294-residue protein sequence, read N- to C-terminus: 4-hydroxy-tetrahydrodipicolinate synthase (294 aa).

T47 provides a ligand contact to pyruvate. Catalysis depends on Y135, which acts as the Proton donor/acceptor. K163 (schiff-base intermediate with substrate) is an active-site residue. T205 is a binding site for pyruvate.

Belongs to the DapA family. As to quaternary structure, homotetramer; dimer of dimers.

The protein resides in the cytoplasm. It catalyses the reaction L-aspartate 4-semialdehyde + pyruvate = (2S,4S)-4-hydroxy-2,3,4,5-tetrahydrodipicolinate + H2O + H(+). It functions in the pathway amino-acid biosynthesis; L-lysine biosynthesis via DAP pathway; (S)-tetrahydrodipicolinate from L-aspartate: step 3/4. Catalyzes the condensation of (S)-aspartate-beta-semialdehyde [(S)-ASA] and pyruvate to 4-hydroxy-tetrahydrodipicolinate (HTPA). The sequence is that of 4-hydroxy-tetrahydrodipicolinate synthase from Rickettsia peacockii (strain Rustic).